Consider the following 164-residue polypeptide: UPF0262 protein Saro_0143 (164 aa).

The protein belongs to the UPF0262 family.

This Novosphingobium aromaticivorans (strain ATCC 700278 / DSM 12444 / CCUG 56034 / CIP 105152 / NBRC 16084 / F199) protein is UPF0262 protein Saro_0143.